The chain runs to 95 residues: Glutamyl-tRNA(Gln) amidotransferase subunit C (95 aa).

Belongs to the GatC family. As to quaternary structure, heterotrimer of A, B and C subunits.

The catalysed reaction is L-glutamyl-tRNA(Gln) + L-glutamine + ATP + H2O = L-glutaminyl-tRNA(Gln) + L-glutamate + ADP + phosphate + H(+). It carries out the reaction L-aspartyl-tRNA(Asn) + L-glutamine + ATP + H2O = L-asparaginyl-tRNA(Asn) + L-glutamate + ADP + phosphate + 2 H(+). Allows the formation of correctly charged Asn-tRNA(Asn) or Gln-tRNA(Gln) through the transamidation of misacylated Asp-tRNA(Asn) or Glu-tRNA(Gln) in organisms which lack either or both of asparaginyl-tRNA or glutaminyl-tRNA synthetases. The reaction takes place in the presence of glutamine and ATP through an activated phospho-Asp-tRNA(Asn) or phospho-Glu-tRNA(Gln). This is Glutamyl-tRNA(Gln) amidotransferase subunit C from Moraxella catarrhalis (Branhamella catarrhalis).